A 350-amino-acid polypeptide reads, in one-letter code: Biotin synthase (350 aa).

Residues 41–268 (NEVQISRLLS…KSRVRLSAGR (228 aa)) form the Radical SAM core domain. 3 residues coordinate [4Fe-4S] cluster: Cys-56, Cys-60, and Cys-63. [2Fe-2S] cluster contacts are provided by Cys-100, Cys-131, Cys-191, and Arg-263.

This sequence belongs to the radical SAM superfamily. Biotin synthase family. In terms of assembly, homodimer. It depends on [4Fe-4S] cluster as a cofactor. [2Fe-2S] cluster serves as cofactor.

It catalyses the reaction (4R,5S)-dethiobiotin + (sulfur carrier)-SH + 2 reduced [2Fe-2S]-[ferredoxin] + 2 S-adenosyl-L-methionine = (sulfur carrier)-H + biotin + 2 5'-deoxyadenosine + 2 L-methionine + 2 oxidized [2Fe-2S]-[ferredoxin]. It functions in the pathway cofactor biosynthesis; biotin biosynthesis; biotin from 7,8-diaminononanoate: step 2/2. Its function is as follows. Catalyzes the conversion of dethiobiotin (DTB) to biotin by the insertion of a sulfur atom into dethiobiotin via a radical-based mechanism. The polypeptide is Biotin synthase (Shewanella piezotolerans (strain WP3 / JCM 13877)).